We begin with the raw amino-acid sequence, 326 residues long: Archaeal actin homolog (326 aa).

Residues 10–14, Ser-179, Gln-231, 285–288, and Gln-311 each bind ATP; these read YGDTK and GGAN.

Belongs to the thermophilic archaeal actin family.

In terms of biological role, polymerizes into bundles of filaments. Polymerization requires NTP and is optimal with ATP, but GTP, UTP, CTP, and even the deoxy form of NTP can also support the polymerization reaction. The polypeptide is Archaeal actin homolog (Thermoplasma volcanium (strain ATCC 51530 / DSM 4299 / JCM 9571 / NBRC 15438 / GSS1)).